The primary structure comprises 147 residues: Small ribosomal subunit protein uS12 (147 aa).

It belongs to the universal ribosomal protein uS12 family. As to quaternary structure, part of the 30S ribosomal subunit.

Its function is as follows. With S4 and S5 plays an important role in translational accuracy. Located at the interface of the 30S and 50S subunits. In Thermofilum pendens (strain DSM 2475 / Hrk 5), this protein is Small ribosomal subunit protein uS12.